Reading from the N-terminus, the 268-residue chain is Hydroxyethylthiazole kinase (268 aa).

Met44 is a substrate binding site. ATP is bound by residues Arg119 and Ser165. Gly192 contacts substrate.

The protein belongs to the Thz kinase family. Mg(2+) serves as cofactor.

The enzyme catalyses 5-(2-hydroxyethyl)-4-methylthiazole + ATP = 4-methyl-5-(2-phosphooxyethyl)-thiazole + ADP + H(+). Its pathway is cofactor biosynthesis; thiamine diphosphate biosynthesis; 4-methyl-5-(2-phosphoethyl)-thiazole from 5-(2-hydroxyethyl)-4-methylthiazole: step 1/1. Functionally, catalyzes the phosphorylation of the hydroxyl group of 4-methyl-5-beta-hydroxyethylthiazole (THZ). The sequence is that of Hydroxyethylthiazole kinase from Corynebacterium glutamicum (strain R).